The chain runs to 143 residues: Hemoglobin subunit alpha-2 (143 aa).

Serine 2 is modified (N-acetylserine). A Globin domain is found at 2–143 (SLSAKDKATV…LALALSEKYR (142 aa)). Histidine 60 contributes to the O2 binding site. Histidine 89 lines the heme b pocket.

This sequence belongs to the globin family. As to quaternary structure, hb 2 is a heterotetramer of two alpha-2 and two beta-1 chains. Hb 3 is a heterotetramer of two alpha-2 and two beta-2 chains. As to expression, red blood cells.

Its function is as follows. Involved in oxygen transport from gills to the various peripheral tissues. The sequence is that of Hemoglobin subunit alpha-2 (hba2) from Boreogadus saida (Polar cod).